Reading from the N-terminus, the 831-residue chain is MAMLPLFEPKGRVLLVDGHHLAYRTFFALKGLTTSRGEPVQAVYGFAKSLLKALKEDGDVVVVVFDAKAPSFRHEAYEAYKAGRAPTPEDFPRQLALIKELVDLLGLVRLEVPGFEADDVLATLAKRAEKEGYEVRILTADRDLYQLLSERIAILHPEGYLITPAWLYEKYGLRPEQWVDYRALAGDPSDNIPGVKGIGEKTAQRLIREWGSLENLFQHLDQVKPSLREKLQAGMEALALSRKLSQVHTDLPLEVDFGRRRTPNLEGLRAFLERLEFGSLLHEFGLLEGPKAAEEAPWPPPEGAFLGFSFSRPEPMWAELLALAGAWEGRLHRAQDPLRGLRDLKGVRGILAKDLAVLALREGLDLFPEDDPMLLAYLLDPSNTTPEGVARRYGGEWTEDAGERALLAERLFQTLKERLKGEERLLWLYEEVEKPLSRVLARMEATGVRLDVAYLQALSLEVEAEVRQLEEEVFRLAGHPFNLNSRDQLERVLFDELGLPAIGKTEKTGKRSTSAAVLEALREAHPIVDRILQYRELTKLKNTYIDPLPALVHPKTGRLHTRFNQTATATGRLSSSDPNLQNIPVRTPLGQRIRRAFVAEEGWVLVVLDYSQIELRVLAHLSGDENLIRVFQEGRDIHTQTASWMFGVSPEGVDPLMRRAAKTINFGVLYGMSAHRLSGELSIPYEEAVAFIERYFQSYPKVRAWIEGTLEEGRRRGYVETLFGRRRYVPDLNARVKSVREAAERMAFNMPVQGTAADLMKLAMVRLFPRLQELGARMLLQVHDELVLEAPKDRAERVAALAKEVMEGVWPLQVPLEVEVGLGEDWLSAKE.

The 85-residue stretch at R174 to G258 folds into the 5'-3' exonuclease domain. The tract at residues E409–E831 is polymerase.

This sequence belongs to the DNA polymerase type-A family.

It carries out the reaction DNA(n) + a 2'-deoxyribonucleoside 5'-triphosphate = DNA(n+1) + diphosphate. Its function is as follows. In addition to polymerase activity, this DNA polymerase exhibits 5'-3' exonuclease activity. The polypeptide is DNA polymerase I, thermostable (polA) (Thermus thermophilus).